Reading from the N-terminus, the 339-residue chain is Erlin-2 (339 aa).

The Cytoplasmic segment spans residues 1-3 (MAQ). The helical transmembrane segment at 4–24 (LGAVVAVASSFFCASLFSAVH) threads the bilayer. The Lumenal segment spans residues 25 to 339 (KIEEGHIGVY…EPLETATKEN (315 aa)). N-linked (GlcNAc...) asparagine glycosylation is present at Asn106. The segment at 177 to 309 (EAIRRNYELM…DIPNMFMDSA (133 aa)) is interaction with ERLIN1. At Lys267 the chain carries N6-acetyllysine.

It belongs to the band 7/mec-2 family. In terms of assembly, forms a heteromeric complex with ERLIN1. In complex with ERLIN1, interacts with RNF170. Interacts with activated ITPR1, independently of the degree of ITPR1 polyubiquitination. Interacts with SCAP, INSIG1, SREBF1 and SREBF2 under cholesterol sufficiency conditions; indicative for an association with the SCAP-SREBP-INSIG complex. Probably part of an AMFR/gp78 and INSIG1-containing ubiquitin ligase complex involved in ERAD of HMGCR. Interacts with TMUB1; TMUB1 bridges the association with AMFR. Interacts with SYVN1 and RNF139. Interacts with TMEM259. Interacts with TMEM41B. Deubiquitinated by USP25; leading to stabilization. Ubiquitous.

The protein localises to the endoplasmic reticulum membrane. In terms of biological role, component of the ERLIN1/ERLIN2 complex which mediates the endoplasmic reticulum-associated degradation (ERAD) of inositol 1,4,5-trisphosphate receptors (IP3Rs) such as ITPR1. Promotes sterol-accelerated ERAD of HMGCR probably implicating an AMFR/gp78-containing ubiquitin ligase complex. Involved in regulation of cellular cholesterol homeostasis by regulation the SREBP signaling pathway. May promote ER retention of the SCAP-SREBF complex. The chain is Erlin-2 (ERLIN2) from Homo sapiens (Human).